Here is a 309-residue protein sequence, read N- to C-terminus: Ribonuclease Z (309 aa).

7 residues coordinate Zn(2+): H63, H65, D67, H68, H145, D216, and H274. The active-site Proton acceptor is the D67.

The protein belongs to the RNase Z family. In terms of assembly, homodimer. It depends on Zn(2+) as a cofactor.

It carries out the reaction Endonucleolytic cleavage of RNA, removing extra 3' nucleotides from tRNA precursor, generating 3' termini of tRNAs. A 3'-hydroxy group is left at the tRNA terminus and a 5'-phosphoryl group is left at the trailer molecule.. Its function is as follows. Zinc phosphodiesterase, which displays some tRNA 3'-processing endonuclease activity. Probably involved in tRNA maturation, by removing a 3'-trailer from precursor tRNA. The polypeptide is Ribonuclease Z (Streptococcus agalactiae serotype V (strain ATCC BAA-611 / 2603 V/R)).